Reading from the N-terminus, the 468-residue chain is UDP-N-acetylmuramate--L-alanine ligase (468 aa).

114–120 (GTHGKTT) is a binding site for ATP.

The protein belongs to the MurCDEF family.

The protein localises to the cytoplasm. The enzyme catalyses UDP-N-acetyl-alpha-D-muramate + L-alanine + ATP = UDP-N-acetyl-alpha-D-muramoyl-L-alanine + ADP + phosphate + H(+). It participates in cell wall biogenesis; peptidoglycan biosynthesis. Cell wall formation. This Methylorubrum populi (strain ATCC BAA-705 / NCIMB 13946 / BJ001) (Methylobacterium populi) protein is UDP-N-acetylmuramate--L-alanine ligase.